Here is a 582-residue protein sequence, read N- to C-terminus: Semenogelin-2 (582 aa).

Positions 1–23 are cleaved as a signal peptide; the sequence is MKSIILFVLSLLLILEKQAAVMG. 5 disordered regions span residues 25–65, 91–157, 171–192, 272–366, and 393–557; these read KGGS…SSSI, HKTT…GISS, LSKEQASASGAQKGRTQGGSQS, NLNQ…KDIQ, and SNQD…HNTV. The segment covering 50-59 has biased composition (basic and acidic residues); it reads GQKDKQHTES. Positions 111–134 are enriched in basic residues; it reads QKGRDHVKPKRHFRLIVIHRKGGQ. 2 stretches are compositionally biased toward polar residues: residues 137–157 and 174–192; these read HGTQNPSQNQGNSPSGKGISS and EQASASGAQKGRTQGGSQS. Residues 293 to 310 show a composition bias toward basic and acidic residues; sequence TEERQFNHGEKSVQKDVP. The span at 325–335 shows a compositional bias: polar residues; the sequence is KSQNQVSIPSQ. Composition is skewed to basic and acidic residues over residues 336 to 345, 353 to 366, 396 to 405, and 413 to 426; these read DQEHGHKENK, TEERRLNCGEKDIQ, and TEERRLNGGEKDIQ. Polar residues-rich tracts occupy residues 427 to 437 and 445 to 455; these read KSVSKGSISIQ and KSQNQVTIPSQ. A compositionally biased stretch (basic and acidic residues) spans 456-465; sequence DQEHGHKENK. 2 stretches are compositionally biased toward polar residues: residues 487–498 and 506–529; these read KDVSQSSLSFQT and SQIQTPNPNQDQWSGLNAKGNSGK. A compositionally biased stretch (basic and acidic residues) spans 530–546; the sequence is SADREQDLLSHEQESRY. A compositionally biased stretch (polar residues) spans 547 to 557; the sequence is QQKSSGAHNTV.

The protein belongs to the semenogelin family. Interacts with SERPINA5.

It localises to the secreted. Functionally, participates in the formation of a gel matrix (sperm coagulum) entrapping the accessory gland secretions and ejaculated spermatozoa. The chain is Semenogelin-2 (SEMG2) from Colobus guereza (Mantled guereza).